A 402-amino-acid polypeptide reads, in one-letter code: uncharacterized protein (402 aa).

Residues 1–11 (MTPSNYQRTRW) are Cytoplasmic-facing. The chain crosses the membrane as a helical span at residues 12–34 (LTLIGTIITQFALGSVYTWSLFN). At 35-43 (GALSAKLDA) the chain is on the periplasmic side. The helical transmembrane segment at 44 to 66 (PVSQVAFSFGLLSLGLAISSSVA) threads the bilayer. The Cytoplasmic segment spans residues 67 to 72 (GKLQER). A helical membrane pass occupies residues 73–95 (FGVKRVTMASGILLGLGFFLTAH). Topologically, residues 96 to 99 (SDNL) are periplasmic. The chain crosses the membrane as a helical span at residues 100–122 (MMLWLSAGVLVGLADGAGYLLTL). At 123 to 134 (SNCVKWFPERKG) the chain is on the cytoplasmic side. The chain crosses the membrane as a helical span at residues 135-154 (LISAFAIGSYGLGSLGFKFI). Topologically, residues 155–168 (DTQLLETVGLEKTF) are periplasmic. The helical transmembrane segment at 169-186 (VIWGAIALLMIVFGATLM) threads the bilayer. At 187–216 (KDAPKQEVKTSNGVVEKDYTLAESMRKPQY) the chain is on the cytoplasmic side. Residues 217-236 (WMLAVMFLTACMSGLYVIGV) form a helical membrane-spanning segment. The Periplasmic segment spans residues 237–250 (AKDIAQSLAHLDVV). The chain crosses the membrane as a helical span at residues 251–273 (SAANAVTVISIANLSGRLVLGIL). Residues 274 to 279 (SDKIAR) lie on the Cytoplasmic side of the membrane. A helical membrane pass occupies residues 280–302 (IRVITIGQVISLVGMAALLFAPL). Topologically, residues 303–306 (NAVT) are periplasmic. The chain crosses the membrane as a helical span at residues 307 to 329 (FFAAIACVAFNFGGTITVFPSLV). The Cytoplasmic portion of the chain corresponds to 330-341 (SEFFGLNNLAKN). The helical transmembrane segment at 342 to 364 (YGVIYLGFGIGSICGSIIASLFG) threads the bilayer. Residues 365 to 367 (GFY) are Periplasmic-facing. A helical transmembrane segment spans residues 368 to 387 (VTFYVIFALLILSLALSTTI). The Cytoplasmic portion of the chain corresponds to 388 to 402 (RQPEQKMLREAHGSL).

The protein belongs to the major facilitator superfamily. As to quaternary structure, interacts with BtsS and YpdA.

It localises to the cell inner membrane. In terms of biological role, part of a nutrient-sensing regulatory network composed of the two-component regulatory systems BtsS/BtsR and YpdA/YpdB, and their respective target proteins, BtsT and YhjX. This is an uncharacterized protein from Escherichia coli (strain K12).